A 147-amino-acid chain; its full sequence is MSYNFIKSNKENDFYPVNQSEIEEVEKNLNLKLPSELVNFYLEVGYGFIKGSEFNTNRILDPYSVRDFRLRINDFEFYPDIEIYDEFENDKLIFFEGSESALMSIELNDNNKNPIYYYDIQIATSLTEFLRKIEENDQYYLDLLDDE.

In terms of assembly, probably interacts with cognate toxin YxiD but not with other non-cognate toxins. The interaction inhibits the toxic activity of YxiD.

It localises to the cytoplasm. Its function is as follows. Immunity component of one of 6 LXG toxin-immunity modules in this strain. They promote kin selection, mediate competition in biofilms, and drive spatial segregation of different strains, indicating that LXG toxins may help avoid warfare between strains in biofilms. Mediates intercellular competition during biofilm formation; disruption of the operon disadvantages the bacteria, but overexpression of the cognate immunity protein restores growth in competition with wild-type. In situ neutralizes the toxic effect of cognate toxin YxiD. Neutralizes the toxic activity of cognate toxin YxiD upon expression in E.coli. Does not have immunity protein activity on other LXG toxins. The sequence is that of Immunity protein YxxD (yxxD) from Bacillus subtilis (strain 168).